The chain runs to 218 residues: Peptidyl-tRNA hydrolase (218 aa).

A tRNA-binding site is contributed by Tyr-19. Catalysis depends on His-24, which acts as the Proton acceptor. Tyr-68, Asn-70, and Asn-116 together coordinate tRNA. The disordered stretch occupies residues 181-218; it reads WNTATQRLNARPAPPKPPKAPKAPQPAAADQPKDESQP. Residues 192–204 are compositionally biased toward pro residues; that stretch reads PAPPKPPKAPKAP.

Belongs to the PTH family. Monomer.

The protein resides in the cytoplasm. The catalysed reaction is an N-acyl-L-alpha-aminoacyl-tRNA + H2O = an N-acyl-L-amino acid + a tRNA + H(+). In terms of biological role, hydrolyzes ribosome-free peptidyl-tRNAs (with 1 or more amino acids incorporated), which drop off the ribosome during protein synthesis, or as a result of ribosome stalling. Catalyzes the release of premature peptidyl moieties from peptidyl-tRNA molecules trapped in stalled 50S ribosomal subunits, and thus maintains levels of free tRNAs and 50S ribosomes. In Azoarcus sp. (strain BH72), this protein is Peptidyl-tRNA hydrolase.